Reading from the N-terminus, the 460-residue chain is Histidinol dehydrogenase (460 aa).

Substrate-binding residues include Ser-269, Gln-291, and His-294. Zn(2+) contacts are provided by Gln-291 and His-294. Catalysis depends on proton acceptor residues Glu-358 and His-359. Residues His-359, Asp-392, Glu-446, and His-451 each contribute to the substrate site. Asp-392 is a binding site for Zn(2+). His-451 lines the Zn(2+) pocket.

The protein belongs to the histidinol dehydrogenase family. Zn(2+) serves as cofactor.

The catalysed reaction is L-histidinol + 2 NAD(+) + H2O = L-histidine + 2 NADH + 3 H(+). It participates in amino-acid biosynthesis; L-histidine biosynthesis; L-histidine from 5-phospho-alpha-D-ribose 1-diphosphate: step 9/9. Its function is as follows. Catalyzes the sequential NAD-dependent oxidations of L-histidinol to L-histidinaldehyde and then to L-histidine. The sequence is that of Histidinol dehydrogenase from Rhodopirellula baltica (strain DSM 10527 / NCIMB 13988 / SH1).